Here is a 1482-residue protein sequence, read N- to C-terminus: Glutamate receptor ionotropic, NMDA 2B (1482 aa).

The N-terminal stretch at 1–26 (MKPSAECCSPKFWLVLAVLAVSGSKA) is a signal peptide. The Extracellular segment spans residues 27–557 (RSQKSAPSIG…SAFLEPFSAD (531 aa)). Asn-74 carries an N-linked (GlcNAc...) asparagine glycan. A disulfide bridge connects residues Cys-86 and Cys-321. Positions 127 and 284 each coordinate Zn(2+). Residues Asn-341, Asn-348, Asn-444, and Asn-491 are each glycosylated (N-linked (GlcNAc...) asparagine). Intrachain disulfides connect Cys-429/Cys-456 and Cys-436/Cys-457. L-glutamate contacts are provided by Thr-514 and Arg-519. Asn-542 carries N-linked (GlcNAc...) asparagine glycosylation. Residues 558 to 576 (VWVMMFVMLLIVSAVAVFV) form a helical membrane-spanning segment. Over 577-603 (FEYFSPVGYNRCLADGREPGGPSFTIG) the chain is Cytoplasmic. An intramembrane region (discontinuously helical) is located at residues 604 to 623 (KAIWLLWGLVFNNSVPVQNP). Residues 604 to 623 (KAIWLLWGLVFNNSVPVQNP) form a pore-forming region. The Cytoplasmic portion of the chain corresponds to 624–630 (KGTTSKI). Residues 631-646 (MVSVWAFFAVIFLASY) traverse the membrane as a helical segment. Residues 647–817 (TANLAAFMIQ…VMSSQLDIDN (171 aa)) lie on the Extracellular side of the membrane. Asn-688 is a glycosylation site (N-linked (GlcNAc...) asparagine). Residues 690 to 691 (ST) and Asp-732 each bind L-glutamate. Residues Cys-746 and Cys-801 are joined by a disulfide bond. The chain crosses the membrane as a helical span at residues 818 to 837 (MAGVFYMLGAAMALSLITFI). At 838-1482 (CEHLFYWQFR…EKLSSIESDV (645 aa)) the chain is on the cytoplasmic side. Phosphoserine occurs at positions 882, 886, 917, and 920. Residues Tyr-962 and Tyr-1039 each carry the phosphotyrosine modification. Phosphoserine occurs at positions 1058, 1061, and 1064. The tract at residues 1074 to 1097 (EGNAAKRRKQQYKDSLKKRPASAK) is disordered. Residues Tyr-1109 and Tyr-1133 each carry the phosphotyrosine modification. Ser-1143 carries the phosphoserine modification. Tyr-1155 carries the post-translational modification Phosphotyrosine. Residues 1162 to 1194 (FKRDSVSGGGPCTNRSHLKHGTGDKHGVVGGVP) form a disordered region. Phosphoserine occurs at positions 1255 and 1259. Residues 1266–1277 (PAAPVAVSSNAS) are compositionally biased toward low complexity. The interval 1266–1301 (PAAPVAVSSNASTTKYPQSPTNSKAQKKNRNKLRRQ) is disordered. The segment covering 1278-1289 (TTKYPQSPTNSK) has biased composition (polar residues). Basic residues predominate over residues 1290–1301 (AQKKNRNKLRRQ). Residues 1292 to 1304 (KKNRNKLRRQHSY) are interaction with DAPK1. Position 1303 is a phosphoserine; by DAPK1 (Ser-1303). The residue at position 1472 (Tyr-1472) is a Phosphotyrosine. Positions 1480–1482 (SDV) match the PDZ-binding motif.

The protein belongs to the glutamate-gated ion channel (TC 1.A.10.1) family. NR2B/GRIN2B subfamily. As to quaternary structure, heterotetramer. Forms heterotetrameric channels composed of two GluN1/zeta subunits (GRIN1), and two identical GluN2/epsilon subunits (GRIN2A, GRIN2B, GRIN2C or GRIN2D) or GluN3 subunits (GRIN3A or GRIN3B) (in vitro). Can also form heterotetrameric channels that contain at least two GluN1 subunits and at least two different GluN2 subunits (or a combination of one GluN2 and one GluN3 subunits) (in vitro). In vivo, the subunit composition may depend on the expression levels of the different subunits. Found in a complex with GRIN1, GRIN3A and PPP2CB. Interacts with MAGI3. Interacts with HIP1 and NETO1. Interacts with PDZ domains of PATJ, DLG3 and DLG4. Interacts with DAPK1. Found in a complex with GRIN1 and PRR7. Interacts with PRR7. Interacts with CAMK2A. Interacts with ARC; preventing ARC oligomerization. Interacts with TMEM25. Interacts (via the extreme C-terminus) with FRMPD2 (via the second PDZ domain); the interaction is direct and is likely to promote NMDAR-mediated neural signal transmission. GRIN2A binds FRMPD2 with lower affinity than GRIN2B. Interacts with FAM81A; the interaction facilitates condensate formation via liquid-liquid phase separation. In terms of processing, phosphorylated on tyrosine residues. Phosphorylation at Ser-1303 by DAPK1 enhances synaptic NMDA receptor channel activity. As to expression, detected in brain (at protein level). Detected throughout the brain, and in brain stem trigeminal nucleus. Detected in forebrain.

It localises to the cell membrane. Its subcellular location is the postsynaptic cell membrane. The protein localises to the cell projection. It is found in the dendrite. The protein resides in the late endosome. It localises to the lysosome. Its subcellular location is the cytoplasm. The protein localises to the cytoskeleton. The enzyme catalyses Ca(2+)(in) = Ca(2+)(out). It carries out the reaction Na(+)(in) = Na(+)(out). The catalysed reaction is K(+)(in) = K(+)(out). Component of N-methyl-D-aspartate (NMDA) receptors (NMDARs) that function as heterotetrameric, ligand-gated cation channels with high calcium permeability and voltage-dependent block by Mg(2+). Participates in synaptic plasticity for learning and memory formation by contributing to the long-term depression (LTD) of hippocampus membrane currents. Channel activation requires binding of the neurotransmitter L-glutamate to the GluN2 subunit, glycine or D-serine binding to the GluN1 subunit, plus membrane depolarization to eliminate channel inhibition by Mg(2+). NMDARs mediate simultaneously the potasium efflux and the influx of calcium and sodium. Each GluN2 subunit confers differential attributes to channel properties, including activation, deactivation and desensitization kinetics, pH sensitivity, Ca2(+) permeability, and binding to allosteric modulators. In concert with DAPK1 at extrasynaptic sites, acts as a central mediator for stroke damage. Its phosphorylation at Ser-1303 by DAPK1 enhances synaptic NMDA receptor channel activity inducing injurious Ca2+ influx through them, resulting in an irreversible neuronal death. The protein is Glutamate receptor ionotropic, NMDA 2B of Mus musculus (Mouse).